We begin with the raw amino-acid sequence, 243 residues long: I/6 autoantigen (243 aa).

Residues Leu110–Arg145 enclose the EF-hand domain. A disordered region spans residues Pro166–Cys243. Residues Pro176–Gln196 are compositionally biased toward basic residues. 6 tandem repeats follow at residues Arg181–Gln188, Gly189–Gln196, Arg197–Gln204, Arg205–Gln212, Arg213–Gln220, and Lys221–Gly228. The 6 X 8 AA tandem repeats stretch occupies residues Arg181–Gly228. Over residues Gln198–Gln220 the composition is skewed to basic and acidic residues.

It is found in the cytoplasm. The protein resides in the cytoskeleton. Its function is as follows. Microtubule-associated protein that may be involved in cross-linking microtubules. The polypeptide is I/6 autoantigen (Trypanosoma brucei brucei).